The chain runs to 265 residues: Tryptophan 2,3-dioxygenase (265 aa).

Residues 38–42 and R104 each bind substrate; that span reads FIVVH. A heme-binding site is contributed by H223. T237 is a substrate binding site.

Belongs to the tryptophan 2,3-dioxygenase family. Homotetramer. Requires heme as cofactor.

It catalyses the reaction L-tryptophan + O2 = N-formyl-L-kynurenine. It functions in the pathway amino-acid degradation; L-tryptophan degradation via kynurenine pathway; L-kynurenine from L-tryptophan: step 1/2. Functionally, heme-dependent dioxygenase that catalyzes the oxidative cleavage of the L-tryptophan (L-Trp) pyrrole ring and converts L-tryptophan to N-formyl-L-kynurenine. Catalyzes the oxidative cleavage of the indole moiety. The polypeptide is Tryptophan 2,3-dioxygenase (Anaeromyxobacter dehalogenans (strain 2CP-C)).